A 147-amino-acid polypeptide reads, in one-letter code: Hemoglobin subunit delta (147 aa).

The 145-residue stretch at His-3–His-147 folds into the Globin domain. Position 51 is a phosphoserine (Ser-51). Residues His-64 and His-93 each coordinate heme b.

It belongs to the globin family. Heterotetramer of two delta chains and two alpha chains. In terms of tissue distribution, red blood cells.

This chain is Hemoglobin subunit delta (HBD), found in Trichechus manatus (Caribbean manatee).